Reading from the N-terminus, the 101-residue chain is Small ribosomal subunit protein uS14 (101 aa).

The protein belongs to the universal ribosomal protein uS14 family. As to quaternary structure, part of the 30S ribosomal subunit. Contacts proteins S3 and S10.

In terms of biological role, binds 16S rRNA, required for the assembly of 30S particles and may also be responsible for determining the conformation of the 16S rRNA at the A site. The polypeptide is Small ribosomal subunit protein uS14 (Chlamydia caviae (strain ATCC VR-813 / DSM 19441 / 03DC25 / GPIC) (Chlamydophila caviae)).